The primary structure comprises 389 residues: Dual-specificity RNA methyltransferase RlmN (389 aa).

Glu94 acts as the Proton acceptor in catalysis. A Radical SAM core domain is found at 134-367 (PRVRVTQCIS…CFVRRRRGDD (234 aa)). A disulfide bond links Cys141 and Cys372. 3 residues coordinate [4Fe-4S] cluster: Cys148, Cys152, and Cys155. S-adenosyl-L-methionine is bound by residues 197–198 (GE), Ser229, 253–255 (SLH), and Asn329. Residue Cys372 is the S-methylcysteine intermediate of the active site.

This sequence belongs to the radical SAM superfamily. RlmN family. Requires [4Fe-4S] cluster as cofactor.

The protein resides in the cytoplasm. It catalyses the reaction adenosine(2503) in 23S rRNA + 2 reduced [2Fe-2S]-[ferredoxin] + 2 S-adenosyl-L-methionine = 2-methyladenosine(2503) in 23S rRNA + 5'-deoxyadenosine + L-methionine + 2 oxidized [2Fe-2S]-[ferredoxin] + S-adenosyl-L-homocysteine. It carries out the reaction adenosine(37) in tRNA + 2 reduced [2Fe-2S]-[ferredoxin] + 2 S-adenosyl-L-methionine = 2-methyladenosine(37) in tRNA + 5'-deoxyadenosine + L-methionine + 2 oxidized [2Fe-2S]-[ferredoxin] + S-adenosyl-L-homocysteine. Specifically methylates position 2 of adenine 2503 in 23S rRNA and position 2 of adenine 37 in tRNAs. m2A2503 modification seems to play a crucial role in the proofreading step occurring at the peptidyl transferase center and thus would serve to optimize ribosomal fidelity. The polypeptide is Dual-specificity RNA methyltransferase RlmN (Sorangium cellulosum (strain So ce56) (Polyangium cellulosum (strain So ce56))).